Consider the following 36-residue polypeptide: Pancreatic polypeptide (36 aa).

Tyrosine 36 carries the tyrosine amide modification.

This sequence belongs to the NPY family.

It is found in the secreted. In terms of biological role, hormone secreted by pancreatic cells that acts as a regulator of pancreatic and gastrointestinal functions probably by signaling through the G protein-coupled receptor NPY4R2. This is Pancreatic polypeptide (PPY) from Ceratotherium simum (White rhinoceros).